A 265-amino-acid polypeptide reads, in one-letter code: 3-deoxy-manno-octulosonate cytidylyltransferase (265 aa).

It belongs to the KdsB family.

Its subcellular location is the cytoplasm. It catalyses the reaction 3-deoxy-alpha-D-manno-oct-2-ulosonate + CTP = CMP-3-deoxy-beta-D-manno-octulosonate + diphosphate. Its pathway is nucleotide-sugar biosynthesis; CMP-3-deoxy-D-manno-octulosonate biosynthesis; CMP-3-deoxy-D-manno-octulosonate from 3-deoxy-D-manno-octulosonate and CTP: step 1/1. The protein operates within bacterial outer membrane biogenesis; lipopolysaccharide biosynthesis. Activates KDO (a required 8-carbon sugar) for incorporation into bacterial lipopolysaccharide in Gram-negative bacteria. The sequence is that of 3-deoxy-manno-octulosonate cytidylyltransferase from Delftia acidovorans (strain DSM 14801 / SPH-1).